Reading from the N-terminus, the 450-residue chain is Phosphoglucosamine mutase (450 aa).

Ser-102 (phosphoserine intermediate) is an active-site residue. Ser-102, Asp-243, Asp-245, and Asp-247 together coordinate Mg(2+). Ser-102 is modified (phosphoserine).

This sequence belongs to the phosphohexose mutase family. The cofactor is Mg(2+). In terms of processing, activated by phosphorylation.

It carries out the reaction alpha-D-glucosamine 1-phosphate = D-glucosamine 6-phosphate. In terms of biological role, catalyzes the conversion of glucosamine-6-phosphate to glucosamine-1-phosphate. This is Phosphoglucosamine mutase from Agrobacterium fabrum (strain C58 / ATCC 33970) (Agrobacterium tumefaciens (strain C58)).